We begin with the raw amino-acid sequence, 383 residues long: Anhydro-N-acetylmuramic acid kinase (383 aa).

9–16 (GTSLDGID) contributes to the ATP binding site.

It belongs to the anhydro-N-acetylmuramic acid kinase family.

It catalyses the reaction 1,6-anhydro-N-acetyl-beta-muramate + ATP + H2O = N-acetyl-D-muramate 6-phosphate + ADP + H(+). The protein operates within amino-sugar metabolism; 1,6-anhydro-N-acetylmuramate degradation. It functions in the pathway cell wall biogenesis; peptidoglycan recycling. Its function is as follows. Catalyzes the specific phosphorylation of 1,6-anhydro-N-acetylmuramic acid (anhMurNAc) with the simultaneous cleavage of the 1,6-anhydro ring, generating MurNAc-6-P. Is required for the utilization of anhMurNAc either imported from the medium or derived from its own cell wall murein, and thus plays a role in cell wall recycling. In Bacillus cereus (strain ATCC 10987 / NRS 248), this protein is Anhydro-N-acetylmuramic acid kinase.